Reading from the N-terminus, the 151-residue chain is Putative pre-16S rRNA nuclease (151 aa).

It belongs to the YqgF nuclease family.

Its subcellular location is the cytoplasm. Functionally, could be a nuclease involved in processing of the 5'-end of pre-16S rRNA. This chain is Putative pre-16S rRNA nuclease, found in Bifidobacterium longum subsp. infantis (strain ATCC 15697 / DSM 20088 / JCM 1222 / NCTC 11817 / S12).